Reading from the N-terminus, the 158-residue chain is MRAPMTSKGAQRLREELEHLKSVKRPEVINAIAEARAHGDLKENAEYHAAREQQSFIEGRIKQLESELSHAEIIDITKLSAGTKIVFGATVTLADTETDEEKRYQIVGDLEADIKMGLIAISSPLARALIGKLEGDSVTIDAPAGQREYEVVSVAYLD.

A coiled-coil region spans residues 45 to 73 (AEYHAAREQQSFIEGRIKQLESELSHAEI).

This sequence belongs to the GreA/GreB family.

Functionally, necessary for efficient RNA polymerase transcription elongation past template-encoded arresting sites. The arresting sites in DNA have the property of trapping a certain fraction of elongating RNA polymerases that pass through, resulting in locked ternary complexes. Cleavage of the nascent transcript by cleavage factors such as GreA or GreB allows the resumption of elongation from the new 3'terminus. GreA releases sequences of 2 to 3 nucleotides. This Xanthomonas axonopodis pv. citri (strain 306) protein is Transcription elongation factor GreA.